Here is a 31-residue protein sequence, read N- to C-terminus: Cytochrome b6-f complex subunit 6 (31 aa).

A helical transmembrane segment spans residues 4–24 (LTSYFGFLLAALTITFVLFIG).

Belongs to the PetL family. In terms of assembly, the 4 large subunits of the cytochrome b6-f complex are cytochrome b6, subunit IV (17 kDa polypeptide, PetD), cytochrome f and the Rieske protein, while the 4 small subunits are PetG, PetL, PetM and PetN. The complex functions as a dimer.

Its subcellular location is the plastid. It localises to the chloroplast thylakoid membrane. Its function is as follows. Component of the cytochrome b6-f complex, which mediates electron transfer between photosystem II (PSII) and photosystem I (PSI), cyclic electron flow around PSI, and state transitions. PetL is important for photoautotrophic growth as well as for electron transfer efficiency and stability of the cytochrome b6-f complex. This is Cytochrome b6-f complex subunit 6 from Oxybasis rubra (Red goosefoot).